Reading from the N-terminus, the 841-residue chain is Rhomboid-like protease 5 (841 aa).

The span at 1–10 shows a compositional bias: low complexity; the sequence is MSSKGGSSRL. The disordered stretch occupies residues 1-289; it reads MSSKGGSSRL…GGDGGPRRHS (289 aa). Basic and acidic residues predominate over residues 11–51; it reads GSKDLKKMTSRTERELRDSGRVRGEVERVEKRLRATAKVKE. The span at 95–132 shows a compositional bias: low complexity; sequence LRPASSSPRLASSSRPTESTLPSSSSRALQGASSSSSS. 3 stretches are compositionally biased toward basic and acidic residues: residues 154 to 163, 209 to 230, and 243 to 275; these read LRQEKKRLPE, RTAE…RGSV, and SSHE…RSGD. 6 helical membrane passes run 323–343, 464–484, 492–512, 526–546, 571–590, and 673–693; these read FLMI…ELVL, MFRV…LLNV, WILE…VGGV, VTVG…PFSI, FGNM…GGLI, and FAAA…LLVP. Residue S531 is the Nucleophile of the active site. H585 is a catalytic residue.

This sequence belongs to the peptidase S54 family.

The protein localises to the membrane. It carries out the reaction Cleaves type-1 transmembrane domains using a catalytic dyad composed of serine and histidine that are contributed by different transmembrane domains.. In terms of biological role, serine protease involved in intramembrane proteolysis. Cleaves microneme adhesins, such as MIC2. This step is essential for efficient invasion of host cells. Catalyzes intramembrane proteolysis of AMA1. The protein is Rhomboid-like protease 5 (ROM5) of Toxoplasma gondii.